The chain runs to 595 residues: Flap endonuclease 1 (595 aa).

Residues 1–106 (MGIKGLTKFI…SELEKRGEKR (106 aa)) are N-domain. Asp34 is a Mg(2+) binding site. Arg47 and Arg72 together coordinate DNA. Asp88, Glu160, Glu162, Asp181, and Asp183 together coordinate Mg(2+). Positions 124–267 (EIKKQSGRTV…KTAYNLIKEY (144 aa)) are I-domain. Glu160 is a binding site for DNA. Gly245 and Asp247 together coordinate DNA. Position 247 (Asp247) interacts with Mg(2+). Positions 350–358 (TQRRLDNFF) are interaction with PCNA. Positions 370 to 493 (NEESQIKKEV…TGDVYSFPNG (124 aa)) are disordered. Positions 392–401 (NDSSTKLNSK) are enriched in polar residues. The span at 406-425 (PKGEKESKTEKDDGDTHNGN) shows a compositional bias: basic and acidic residues. Residues 426-436 (DNEEEGGEGET) are compositionally biased toward acidic residues. The span at 461–475 (HKSDSESGNVKKEST) shows a compositional bias: basic and acidic residues.

It belongs to the XPG/RAD2 endonuclease family. FEN1 subfamily. In terms of assembly, interacts with PCNA. Three molecules of FEN1 bind to one PCNA trimer with each molecule binding to one PCNA monomer. PCNA stimulates the nuclease activity without altering cleavage specificity. It depends on Mg(2+) as a cofactor. Post-translationally, phosphorylated. Phosphorylation upon DNA damage induces relocalization to the nuclear plasma.

The protein localises to the nucleus. It is found in the nucleolus. Its subcellular location is the nucleoplasm. The protein resides in the mitochondrion. In terms of biological role, structure-specific nuclease with 5'-flap endonuclease and 5'-3' exonuclease activities involved in DNA replication and repair. During DNA replication, cleaves the 5'-overhanging flap structure that is generated by displacement synthesis when DNA polymerase encounters the 5'-end of a downstream Okazaki fragment. It enters the flap from the 5'-end and then tracks to cleave the flap base, leaving a nick for ligation. Also involved in the long patch base excision repair (LP-BER) pathway, by cleaving within the apurinic/apyrimidinic (AP) site-terminated flap. Acts as a genome stabilization factor that prevents flaps from equilibrating into structures that lead to duplications and deletions. Also possesses 5'-3' exonuclease activity on nicked or gapped double-stranded DNA, and exhibits RNase H activity. Also involved in replication and repair of rDNA and in repairing mitochondrial DNA. This is Flap endonuclease 1 from Plasmodium knowlesi (strain H).